A 130-amino-acid polypeptide reads, in one-letter code: Iron-sulfur cluster assembly 1 homolog, mitochondrial (130 aa).

Residues 1 to 24 (MATRVVATATVRAVKGRKLIPTRA) constitute a mitochondrion transit peptide. Fe cation contacts are provided by C58, C122, and C124.

This sequence belongs to the HesB/IscA family. As to quaternary structure, interacts with cry. As to expression, detected in head.

The protein localises to the mitochondrion. Its function is as follows. Involved in the assembly of mitochondrial iron-sulfur proteins. Probably involved in the binding of an intermediate of Fe/S cluster assembly. Required for maintenance of circadian rhythms under constant darkness. The protein is Iron-sulfur cluster assembly 1 homolog, mitochondrial of Drosophila melanogaster (Fruit fly).